The chain runs to 102 residues: MAMTKTKELVSSNAVVVFSKTYCPYCTSVKKLLDQLGAKYKVVELDTESDGSEIQTALAEWTGQRTVPNVFIGGKHIGGCDSTTAKHSQGQLVPLLTEAGAV.

In terms of domain architecture, Glutaredoxin spans 3–102; the sequence is MTKTKELVSS…VPLLTEAGAV (100 aa). Cys23 and Cys26 are oxidised to a cystine.

Belongs to the glutaredoxin family. CPYC subfamily.

The protein localises to the cytoplasm. Its function is as follows. Has a glutathione-disulfide oxidoreductase activity in the presence of NADPH and glutathione reductase. Reduces low molecular weight disulfides and proteins. In Ricinus communis (Castor bean), this protein is Glutaredoxin.